Here is a 54-residue protein sequence, read N- to C-terminus: Large ribosomal subunit protein bL32 (54 aa).

The tract at residues 1-54 (MAVQQNRKTRSRRGMRRSHDALTAAQLSVDSTSGETHRRHHVTADGYYRGKKVI) is disordered. Residues 7-16 (RKTRSRRGMR) are compositionally biased toward basic residues. The span at 25 to 34 (AQLSVDSTSG) shows a compositional bias: polar residues.

The protein belongs to the bacterial ribosomal protein bL32 family.

The polypeptide is Large ribosomal subunit protein bL32 (Tolumonas auensis (strain DSM 9187 / NBRC 110442 / TA 4)).